A 287-amino-acid chain; its full sequence is ATP synthase subunit a (287 aa).

Transmembrane regions (helical) follow at residues 37 to 57 (LDSV…MWLA), 96 to 116 (FIAP…AMDL), 149 to 169 (LGLS…IKGL), 187 to 207 (PVFA…EYVA), 224 to 244 (ELVF…LSGV), and 266 to 286 (TLQA…AHEA).

The protein belongs to the ATPase A chain family. F-type ATPases have 2 components, CF(1) - the catalytic core - and CF(0) - the membrane proton channel. CF(1) has five subunits: alpha(3), beta(3), gamma(1), delta(1), epsilon(1). CF(0) has three main subunits: a(1), b(2) and c(9-12). The alpha and beta chains form an alternating ring which encloses part of the gamma chain. CF(1) is attached to CF(0) by a central stalk formed by the gamma and epsilon chains, while a peripheral stalk is formed by the delta and b chains.

It localises to the cell inner membrane. Key component of the proton channel; it plays a direct role in the translocation of protons across the membrane. The protein is ATP synthase subunit a of Acidovorax sp. (strain JS42).